Consider the following 315-residue polypeptide: Prephenate dehydratase (315 aa).

In terms of domain architecture, Prephenate dehydratase spans 3–189; sequence RIAYLGPEGT…ARTRFLLIGV (187 aa). The ACT domain occupies 203–280; sequence SVVLRIANVP…ADVRYLGSWP (78 aa).

As to quaternary structure, homodimer.

The catalysed reaction is prephenate + H(+) = 3-phenylpyruvate + CO2 + H2O. It participates in amino-acid biosynthesis; L-phenylalanine biosynthesis; phenylpyruvate from prephenate: step 1/1. This is Prephenate dehydratase (pheA) from Mycobacterium marinum (strain ATCC BAA-535 / M).